The primary structure comprises 284 residues: tRNA uridine(34) hydroxylase (284 aa).

A Rhodanese domain is found at 132–226; it reads AGRPVVMLDT…YFEEVGGAHY (95 aa). C186 (cysteine persulfide intermediate) is an active-site residue.

This sequence belongs to the TrhO family.

It catalyses the reaction uridine(34) in tRNA + AH2 + O2 = 5-hydroxyuridine(34) in tRNA + A + H2O. Functionally, catalyzes oxygen-dependent 5-hydroxyuridine (ho5U) modification at position 34 in tRNAs. The chain is tRNA uridine(34) hydroxylase from Burkholderia orbicola (strain MC0-3).